Reading from the N-terminus, the 270-residue chain is Bacterial microcompartment shell protein PduB (270 aa).

The interval 6–18 (LVEQIMAQVIARV) is probable helix that binds cargo to the BMC shell. BMC circularly permuted domains lie at 47–152 (EFVG…DRTF) and 154–258 (DVYG…LATL).

Belongs to the EutL/PduB family. In terms of assembly, homotrimerizes to form a pseudohexamer with a central pore. The trimers pack into an array. In purified BMCs seen as a 28.0 kDa and 25.0 kDa form, both of which have been N-terminally sequenced and whose N-fMet is removed; the smaller form is called PduB'.

Its subcellular location is the bacterial microcompartment. It participates in polyol metabolism; 1,2-propanediol degradation. Functionally, the two proteins produced are among the major shell proteins of the bacterial microcompartment (BMC) dedicated to 1,2-propanediol (1,2-PD) degradation. Required for structural integrity of BMCs and to mitigate propionaldehyde toxicity. The N-terminal 13 residues are important for correct assembly of the BMC shell. The isolated BMC shell component protein ratio for J:A:B':B:K:T:U is approximately 15:10:7:6:1:1:2. The N-terminus of the long form (PduB) is required for correct formation of BMCs, deletions in the first 37 residues have substantially reduced levels of the major lumen enzymes. May play a major role in binding the enzyme contents to the shell. Its function is as follows. The 1,2-PD-specific bacterial microcompartment (BMC) concentrates low levels of 1,2-PD catabolic enzymes, concentrates volatile reaction intermediates thus enhancing pathway flux and keeps the level of toxic, mutagenic propionaldehyde low. The chain is Bacterial microcompartment shell protein PduB from Salmonella typhimurium (strain LT2 / SGSC1412 / ATCC 700720).